Here is a 485-residue protein sequence, read N- to C-terminus: E3 ubiquitin-protein ligase TRIM34B (485 aa).

An RING-type zinc finger spans residues 15-58 (CPVCQELLTKALSLGCGHLVCQACLISNKNAVINPRGKSSCPVC). Residues 91-127 (TKRDLCVHHGEKLLLFCKEDKKVICWVCERSQEHRGH) form a B box-type zinc finger. Positions 96, 99, 118, and 124 each coordinate Zn(2+). Residues 136–170 (VRECQENLQKALTRLRKEQEKVETLEADIKEDRLS) adopt a coiled-coil conformation. The B30.2/SPRY domain occupies 282-485 (LSGMLQKFRE…APMTLCPLNS (204 aa)).

This sequence belongs to the TRIM/RBCC family. Homotrimer. Interacts (via B-box and SPRY domain) with TRIM5.

The protein resides in the cytoplasm. It is found in the mitochondrion. The enzyme catalyses S-ubiquitinyl-[E2 ubiquitin-conjugating enzyme]-L-cysteine + [acceptor protein]-L-lysine = [E2 ubiquitin-conjugating enzyme]-L-cysteine + N(6)-ubiquitinyl-[acceptor protein]-L-lysine.. The protein operates within protein modification; protein ubiquitination. Functions as antiviral protein and contributes to the defense against retroviral infections. Acts as a capsid-specific restriction factor with the help of TRIM5 and prevents infection from non-host-adapted retroviruses. During influenza A virus infection, promotes programmed cell death by targeting ZBP1 for 'Lys-63'-linked polyubiquitination. In turn, promotes ZBP1 recruitment of RIPK3 to mediate virus-induced programmed necrosis. Negatively regulates the function of mitochondria by enhancing mitochondrial depolarization leading to cytochrome c release and mitochondria-dependent apoptosis. Also promotes the formation of multinucleated giant cells by means of cell fusion and phagocytosis in epithelial cells. Regulates intestinal inflammation by controlling the exocytosis of the major component of colonic mucus MUC2 from colonic goblet cells. The sequence is that of E3 ubiquitin-protein ligase TRIM34B from Mus musculus (Mouse).